The primary structure comprises 565 residues: Oxygen-dependent choline dehydrogenase (565 aa).

Asp6–Glu35 contacts FAD. The disordered stretch occupies residues Gln182–Ala203. His475 acts as the Proton acceptor in catalysis.

Belongs to the GMC oxidoreductase family. It depends on FAD as a cofactor.

The catalysed reaction is choline + A = betaine aldehyde + AH2. The enzyme catalyses betaine aldehyde + NAD(+) + H2O = glycine betaine + NADH + 2 H(+). It functions in the pathway amine and polyamine biosynthesis; betaine biosynthesis via choline pathway; betaine aldehyde from choline (cytochrome c reductase route): step 1/1. In terms of biological role, involved in the biosynthesis of the osmoprotectant glycine betaine. Catalyzes the oxidation of choline to betaine aldehyde and betaine aldehyde to glycine betaine at the same rate. The sequence is that of Oxygen-dependent choline dehydrogenase from Pseudomonas entomophila (strain L48).